Here is a 274-residue protein sequence, read N- to C-terminus: MMHVFEVYPKVNIFLKILHKEGAYHKLISRMCLVKDKLKDIISVKSALSFSLKGDFDCPLEENSLFKALQILKNFLKSKNFSHSAIKSLDTLAIEVEKNIPTQAGLGGGSADAGGLLYHLNHIFDWRLSLEELYSMGSLVGADTNFFISQHKSANATSYGEVIENFEEEPLENRLEIYAPNHVFCSTKAIYQAYKPETCFSQTKEWLKKPSLECLKTCDRSELNDLLKPALLTNQALRDIESELGKEWFFSGSGSAFFRLKNTQKGANETHCQQ.

The active site involves lysine 10. Residue 101 to 111 (PTQAGLGGGSA) participates in ATP binding. Aspartate 143 is an active-site residue.

It belongs to the GHMP kinase family. IspE subfamily.

The enzyme catalyses 4-CDP-2-C-methyl-D-erythritol + ATP = 4-CDP-2-C-methyl-D-erythritol 2-phosphate + ADP + H(+). It participates in isoprenoid biosynthesis; isopentenyl diphosphate biosynthesis via DXP pathway; isopentenyl diphosphate from 1-deoxy-D-xylulose 5-phosphate: step 3/6. Functionally, catalyzes the phosphorylation of the position 2 hydroxy group of 4-diphosphocytidyl-2C-methyl-D-erythritol. This Helicobacter pylori (strain HPAG1) protein is 4-diphosphocytidyl-2-C-methyl-D-erythritol kinase.